We begin with the raw amino-acid sequence, 311 residues long: Acetyl-coenzyme A carboxylase carboxyl transferase subunit alpha (311 aa).

The 251-residue stretch at 36 to 286 (ELKKEVERVY…VNYFLKSLEE (251 aa)) folds into the CoA carboxyltransferase C-terminal domain.

The protein belongs to the AccA family. As to quaternary structure, acetyl-CoA carboxylase is a heterohexamer composed of biotin carboxyl carrier protein (AccB), biotin carboxylase (AccC) and two subunits each of ACCase subunit alpha (AccA) and ACCase subunit beta (AccD).

It is found in the cytoplasm. The enzyme catalyses N(6)-carboxybiotinyl-L-lysyl-[protein] + acetyl-CoA = N(6)-biotinyl-L-lysyl-[protein] + malonyl-CoA. It participates in lipid metabolism; malonyl-CoA biosynthesis; malonyl-CoA from acetyl-CoA: step 1/1. Functionally, component of the acetyl coenzyme A carboxylase (ACC) complex. First, biotin carboxylase catalyzes the carboxylation of biotin on its carrier protein (BCCP) and then the CO(2) group is transferred by the carboxyltransferase to acetyl-CoA to form malonyl-CoA. The polypeptide is Acetyl-coenzyme A carboxylase carboxyl transferase subunit alpha (Wolinella succinogenes (strain ATCC 29543 / DSM 1740 / CCUG 13145 / JCM 31913 / LMG 7466 / NCTC 11488 / FDC 602W) (Vibrio succinogenes)).